The sequence spans 349 residues: N-acetyltaurine hydrolase (349 aa).

6 residues coordinate a divalent metal cation: His-26, His-28, Glu-169, His-201, His-230, and Asp-298.

It belongs to the metallo-dependent hydrolases superfamily. Phosphotriesterase family. A divalent metal cation is required as a cofactor.

It is found in the cytoplasm. It localises to the cytosol. The catalysed reaction is N-acetyltaurine + H2O = taurine + acetate. It carries out the reaction N-propanoyltaurine + H2O = propanoate + taurine. The enzyme catalyses N-acetyl-L-methionine + H2O = L-methionine + acetate. It catalyses the reaction N-acetyl-L-isoleucine + H2O = L-isoleucine + acetate. The catalysed reaction is N-acetyl-L-leucine + H2O = L-leucine + acetate. It carries out the reaction N-acetyl-L-valine + H2O = L-valine + acetate. Functionally, N-acetyltaurine hydrolase that regulates feeding by catalyzing the hydrolysis of N-acetyltaurine into taurine and acetate. N-acetyltaurine has anorexigenic and anti-obesity effects that are dependent on GFRAL receptor and GDF15. PTER also acts on other N-acetyl amino acids (Met, Ile, Leu, Val) and N-propionyltaurine, but at lower rates. This Bos taurus (Bovine) protein is N-acetyltaurine hydrolase (PTER).